The following is a 1067-amino-acid chain: Hemoglobin and hemoglobin-haptoglobin-binding protein B (1067 aa).

The first 24 residues, 1–24 (MTNFKFSLLACSIAFALNASTAYA), serve as a signal peptide directing secretion. Tandem repeats lie at residues 26 to 29 (QPTN), 30 to 33 (QPTN), 34 to 37 (QPTN), 38 to 41 (QPTN), 42 to 45 (QPTN), and 46 to 49 (QPTN). The segment at 26 to 49 (QPTNQPTNQPTNQPTNQPTNQPTN) is 6 X 4 AA tandem repeats of Q-P-T-N. Positions 26–51 (QPTNQPTNQPTNQPTNQPTNQPTNQN) are enriched in low complexity. The interval 26–53 (QPTNQPTNQPTNQPTNQPTNQPTNQNSN) is disordered. The short motif at 59–66 (EQINVSGS) is the TonB box element. In terms of domain architecture, TBDR plug spans 71 to 196 (NIKEKKVGET…LGGSVIFETK (126 aa)). The TBDR beta-barrel domain occupies 204–1067 (DKDYYLSYKR…NYRMSVQFEF (864 aa)). A TonB C-terminal box motif is present at residues 1050–1067 (NRFYAPGRNYRMSVQFEF).

This sequence belongs to the TonB-dependent receptor family. Hemoglobin/haptoglobin binding protein subfamily.

The protein localises to the cell outer membrane. Its function is as follows. Acts as a receptor for hemoglobin or the hemoglobin/haptoglobin complex of the human host and is required for heme uptake. The sequence is that of Hemoglobin and hemoglobin-haptoglobin-binding protein B (hgbB) from Haemophilus influenzae.